The chain runs to 601 residues: Molybdenum cofactor synthesis protein cinnamon (601 aa).

Residues 3–153 (SITFGVLTIS…TISALLPHAV (151 aa)) form an MPT adenylyltransferase region. The interval 173–195 (SAQKSHICPHKTGTGTDSDRNSP) is disordered. Positions 184–596 (TGTGTDSDRN…FPASVLRFDF (413 aa)) are MPT Mo-transferase. The residue at position 376 (S376) is a Phosphoserine.

This sequence in the N-terminal section; belongs to the MoaB/Mog family. The protein in the C-terminal section; belongs to the MoeA family. The cofactor is Mg(2+).

It carries out the reaction molybdopterin + ATP + H(+) = adenylyl-molybdopterin + diphosphate. It catalyses the reaction adenylyl-molybdopterin + molybdate = Mo-molybdopterin + AMP + H(+). Its pathway is cofactor biosynthesis; molybdopterin biosynthesis. Functionally, catalyzes two steps in the biosynthesis of the molybdenum cofactor. In the first step, molybdopterin is adenylated. Subsequently, molybdate is inserted into adenylated molybdopterin and AMP is released. The protein is Molybdenum cofactor synthesis protein cinnamon (cin) of Drosophila melanogaster (Fruit fly).